Reading from the N-terminus, the 398-residue chain is Probable elongation factor 1-gamma (398 aa).

The GST C-terminal domain occupies G66–F199. The tract at residues A210–K248 is disordered. Residues P211–K221 are compositionally biased toward basic and acidic residues. The region spanning S239–K398 is the EF-1-gamma C-terminal domain.

EF-1 is composed of four subunits: alpha, beta, delta, and gamma. Post-translationally, AMPylated by fic-1.

Probably plays a role in anchoring the complex to other cellular components. The protein is Probable elongation factor 1-gamma of Caenorhabditis elegans.